The sequence spans 60 residues: Small, acid-soluble spore protein 1 (60 aa).

This sequence belongs to the alpha/beta-type SASP family. In terms of processing, SASP are degraded in the first minutes of spore germination and provide amino acids for both new protein synthesis and metabolism.

SASP are bound to spore DNA. They are double-stranded DNA-binding proteins that cause DNA to change to an a-like conformation. They protect the DNA backbone from chemical and enzymatic cleavage and are thus involved in dormant spore's high resistance to UV light. This Clostridium perfringens (strain 13 / Type A) protein is Small, acid-soluble spore protein 1 (ssp1).